The primary structure comprises 310 residues: Protoheme IX farnesyltransferase 2 (310 aa).

Helical transmembrane passes span 25-45 (PGII…AAKG), 49-69 (LVLM…GCAI), 98-118 (HVLL…ALFT), 121-141 (LALL…SLYM), 145-165 (SVYG…VGYC), 176-196 (VILL…IAIF), 222-242 (IVLY…AGYT), 245-265 (AFMA…LKGY), and 277-297 (QVFG…ALDF).

It belongs to the UbiA prenyltransferase family. Protoheme IX farnesyltransferase subfamily.

The protein localises to the cell inner membrane. The catalysed reaction is heme b + (2E,6E)-farnesyl diphosphate + H2O = Fe(II)-heme o + diphosphate. Its pathway is porphyrin-containing compound metabolism; heme O biosynthesis; heme O from protoheme: step 1/1. In terms of biological role, converts heme B (protoheme IX) to heme O by substitution of the vinyl group on carbon 2 of heme B porphyrin ring with a hydroxyethyl farnesyl side group. The protein is Protoheme IX farnesyltransferase 2 of Shewanella sp. (strain MR-7).